A 357-amino-acid chain; its full sequence is Isopentenyl-diphosphate delta-isomerase (357 aa).

6–7 contributes to the substrate binding site; the sequence is RK. Residues Ser62, 63 to 65, Ser93, and Asn122 contribute to the FMN site; that span reads AMT. 93–95 provides a ligand contact to substrate; sequence SQR. Gln156 contacts substrate. Glu157 contacts Mg(2+). Residues Lys186, Thr216, 267-269, and 288-289 contribute to the FMN site; these read GVR and AL.

Belongs to the IPP isomerase type 2 family. In terms of assembly, homooctamer. Dimer of tetramers. FMN is required as a cofactor. The cofactor is NADPH. Requires Mg(2+) as cofactor.

The protein resides in the cytoplasm. The enzyme catalyses isopentenyl diphosphate = dimethylallyl diphosphate. Functionally, involved in the biosynthesis of isoprenoids. Catalyzes the 1,3-allylic rearrangement of the homoallylic substrate isopentenyl (IPP) to its allylic isomer, dimethylallyl diphosphate (DMAPP). The chain is Isopentenyl-diphosphate delta-isomerase from Methanothrix thermoacetophila (strain DSM 6194 / JCM 14653 / NBRC 101360 / PT) (Methanosaeta thermophila).